The sequence spans 621 residues: 1-deoxy-D-xylulose-5-phosphate synthase (621 aa).

Residues histidine 80 and 121–123 each bind thiamine diphosphate; that span reads GHS. Aspartate 152 lines the Mg(2+) pocket. Residues 153 to 154, asparagine 181, tyrosine 288, and glutamate 370 each bind thiamine diphosphate; that span reads GA. Mg(2+) is bound at residue asparagine 181.

The protein belongs to the transketolase family. DXPS subfamily. As to quaternary structure, homodimer. Mg(2+) serves as cofactor. It depends on thiamine diphosphate as a cofactor.

The catalysed reaction is D-glyceraldehyde 3-phosphate + pyruvate + H(+) = 1-deoxy-D-xylulose 5-phosphate + CO2. Its pathway is metabolic intermediate biosynthesis; 1-deoxy-D-xylulose 5-phosphate biosynthesis; 1-deoxy-D-xylulose 5-phosphate from D-glyceraldehyde 3-phosphate and pyruvate: step 1/1. Catalyzes the acyloin condensation reaction between C atoms 2 and 3 of pyruvate and glyceraldehyde 3-phosphate to yield 1-deoxy-D-xylulose-5-phosphate (DXP). The sequence is that of 1-deoxy-D-xylulose-5-phosphate synthase from Edwardsiella ictaluri (strain 93-146).